The sequence spans 627 residues: Pentatricopeptide repeat-containing protein At2g15630, mitochondrial (627 aa).

The transit peptide at 1 to 29 directs the protein to the mitochondrion; that stretch reads MRRFTVPCILRHRISILSGAGYSPAAARL. PPR repeat units follow at residues 154 to 188, 189 to 223, 224 to 258, 259 to 293, 294 to 324, 326 to 360, 361 to 395, 396 to 430, 431 to 465, 466 to 500, 501 to 535, 536 to 570, and 571 to 605; these read STIL…GFYP, KTET…EIKS, NVYT…GIKP, TIVT…GFQP, DMQT…IGLV, DSVS…GMVP, TFYT…GIVL, DSVT…GIQP, TQFT…GMKP, DLVM…SINP, DDVT…GIKP, DHIS…GFNP, and TLLT…GIVP.

This sequence belongs to the PPR family. P subfamily.

The protein localises to the mitochondrion. This Arabidopsis thaliana (Mouse-ear cress) protein is Pentatricopeptide repeat-containing protein At2g15630, mitochondrial.